A 589-amino-acid polypeptide reads, in one-letter code: Glutamine--fructose-6-phosphate aminotransferase [isomerizing] (589 aa).

The Nucleophile; for GATase activity role is filled by C2. In terms of domain architecture, Glutamine amidotransferase type-2 spans 2–221 (CGIIGIVSLR…DDELGFITPE (220 aa)). 2 SIS domains span residues 286–426 (VIEE…KMEK) and 445–579 (IGEE…PDKP). K584 functions as the For Fru-6P isomerization activity in the catalytic mechanism.

In terms of assembly, homodimer.

It localises to the cytoplasm. The enzyme catalyses D-fructose 6-phosphate + L-glutamine = D-glucosamine 6-phosphate + L-glutamate. Functionally, catalyzes the first step in hexosamine metabolism, converting fructose-6P into glucosamine-6P using glutamine as a nitrogen source. This chain is Glutamine--fructose-6-phosphate aminotransferase [isomerizing], found in Sulfurisphaera tokodaii (strain DSM 16993 / JCM 10545 / NBRC 100140 / 7) (Sulfolobus tokodaii).